A 71-amino-acid chain; its full sequence is Cytochrome c oxidase subunit 8C, mitochondrial (71 aa).

A mitochondrion-targeting transit peptide spans 1-28 (MAHLPRVCPFIRRLRVALLCLRPGHRFA). Topologically, residues 29 to 39 (HSEPQRQRPAS) are mitochondrial matrix. Residues 40–63 (ALEMAVGIVVIFSAFLTPSAYVLS) form a helical membrane-spanning segment. The Mitochondrial intermembrane segment spans residues 64–71 (NLSQFRRE).

Belongs to the cytochrome c oxidase VIII family. Component of the cytochrome c oxidase (complex IV, CIV), a multisubunit enzyme composed of 14 subunits. The complex is composed of a catalytic core of 3 subunits MT-CO1, MT-CO2 and MT-CO3, encoded in the mitochondrial DNA, and 11 supernumerary subunits COX4I, COX5A, COX5B, COX6A, COX6B, COX6C, COX7A, COX7B, COX7C, COX8 and NDUFA4, which are encoded in the nuclear genome. The complex exists as a monomer or a dimer and forms supercomplexes (SCs) in the inner mitochondrial membrane with NADH-ubiquinone oxidoreductase (complex I, CI) and ubiquinol-cytochrome c oxidoreductase (cytochrome b-c1 complex, complex III, CIII), resulting in different assemblies (supercomplex SCI(1)III(2)IV(1) and megacomplex MCI(2)III(2)IV(2)).

It localises to the mitochondrion inner membrane. The protein operates within energy metabolism; oxidative phosphorylation. Functionally, component of the cytochrome c oxidase, the last enzyme in the mitochondrial electron transport chain which drives oxidative phosphorylation. The respiratory chain contains 3 multisubunit complexes succinate dehydrogenase (complex II, CII), ubiquinol-cytochrome c oxidoreductase (cytochrome b-c1 complex, complex III, CIII) and cytochrome c oxidase (complex IV, CIV), that cooperate to transfer electrons derived from NADH and succinate to molecular oxygen, creating an electrochemical gradient over the inner membrane that drives transmembrane transport and the ATP synthase. Cytochrome c oxidase is the component of the respiratory chain that catalyzes the reduction of oxygen to water. Electrons originating from reduced cytochrome c in the intermembrane space (IMS) are transferred via the dinuclear copper A center (CU(A)) of subunit 2 and heme A of subunit 1 to the active site in subunit 1, a binuclear center (BNC) formed by heme A3 and copper B (CU(B)). The BNC reduces molecular oxygen to 2 water molecules using 4 electrons from cytochrome c in the IMS and 4 protons from the mitochondrial matrix. The polypeptide is Cytochrome c oxidase subunit 8C, mitochondrial (COX8C) (Eulemur fulvus fulvus (Brown lemur)).